Here is a 96-residue protein sequence, read N- to C-terminus: Small ribosomal subunit protein bS21 (96 aa).

Residues 52–96 form a disordered region; the sequence is RRARKQARKTAIREGLIAAPKPKARPVSPRRPAAPAPASSPVGAA. Residues 69–96 show a composition bias toward low complexity; sequence AAPKPKARPVSPRRPAAPAPASSPVGAA.

It belongs to the bacterial ribosomal protein bS21 family.

This chain is Small ribosomal subunit protein bS21, found in Methylobacterium nodulans (strain LMG 21967 / CNCM I-2342 / ORS 2060).